Here is a 459-residue protein sequence, read N- to C-terminus: Putrescine aminotransferase (459 aa).

Pyridoxal 5'-phosphate contacts are provided by residues 150–151 (GT) and Gln-274. Lys-300 bears the N6-(pyridoxal phosphate)lysine mark. Thr-332 is a pyridoxal 5'-phosphate binding site.

The protein belongs to the class-III pyridoxal-phosphate-dependent aminotransferase family. Putrescine aminotransferase subfamily. It depends on pyridoxal 5'-phosphate as a cofactor.

The enzyme catalyses an alkane-alpha,omega-diamine + 2-oxoglutarate = an omega-aminoaldehyde + L-glutamate. The catalysed reaction is putrescine + 2-oxoglutarate = 1-pyrroline + L-glutamate + H2O. It carries out the reaction cadaverine + 2-oxoglutarate = 5-aminopentanal + L-glutamate. Its pathway is amine and polyamine degradation; putrescine degradation; 4-aminobutanal from putrescine (transaminase route): step 1/1. Functionally, catalyzes the aminotransferase reaction from putrescine to 2-oxoglutarate, leading to glutamate and 4-aminobutanal, which spontaneously cyclizes to form 1-pyrroline. This is the first step in one of two pathways for putrescine degradation, where putrescine is converted into 4-aminobutanoate (gamma-aminobutyrate or GABA) via 4-aminobutanal. Also functions as a cadaverine transaminase in a a L-lysine degradation pathway to succinate that proceeds via cadaverine, glutarate and L-2-hydroxyglutarate. This is Putrescine aminotransferase from Salmonella agona (strain SL483).